The primary structure comprises 200 residues: uncharacterized protein (200 aa).

The Response regulatory domain maps to 3–119 (RLFIAEDQRM…DLADAIRKCV (117 aa)). 4-aspartylphosphate is present on Asp-54. The region spanning 133–198 (MMRDENPLTV…EAASIAEEKG (66 aa)) is the HTH luxR-type domain. The H-T-H motif DNA-binding region spans 157–176 (TKDITLELYLSQGTVRNYIS).

In terms of processing, phosphorylated by YvfT.

It localises to the cytoplasm. Member of the two-component regulatory system YvfT/YvfU. This is an uncharacterized protein from Bacillus subtilis (strain 168).